The following is a 602-amino-acid chain: ATP-dependent DNA helicase XPD (602 aa).

One can recognise a Helicase ATP-binding domain in the interval 1 to 247 (MQKSYGVALE…DLIEMIRSAL (247 aa)). Residue 11 to 18 (SPTGSGKT) coordinates ATP. Residues Cys74, Cys95, Cys110, and Cys146 each contribute to the [4Fe-4S] cluster site. The DEAH box signature appears at 193–196 (DEAH). Residues 421 to 602 (VIEDIILKVK…SAQAREKYGA (182 aa)) form the Helicase C-terminal domain. SsDNA-binding residues include Trp531 and Arg566.

Belongs to the helicase family. RAD3/XPD subfamily. As to quaternary structure, monomer. [4Fe-4S] cluster serves as cofactor.

It carries out the reaction Couples ATP hydrolysis with the unwinding of duplex DNA at the replication fork by translocating in the 5'-3' direction. This creates two antiparallel DNA single strands (ssDNA). The leading ssDNA polymer is the template for DNA polymerase III holoenzyme which synthesizes a continuous strand.. The catalysed reaction is ATP + H2O = ADP + phosphate + H(+). Its function is as follows. ATP-dependent 5'-3' DNA helicase. Thought to be involved in nucleotide excision repair (NER) of DNA. The chain is ATP-dependent DNA helicase XPD from Thermoplasma acidophilum (strain ATCC 25905 / DSM 1728 / JCM 9062 / NBRC 15155 / AMRC-C165).